A 407-amino-acid polypeptide reads, in one-letter code: MKRAFIMVLDSFGIGATEDADRFGDVGSDTLGHIAEACANGEADNGRKGPLNLPNLTRLGLVKAHEGSTGKIAAGMDGNADVIGAYAWAHELSSGKDTPSGHWEIAGVPVLFDWGYFSDHENSFPQELLDKLVKRANLPGYLGNCHSSGTVILDQLGEEHMKTGKPIFYTSADSVFQIACHEETFGLDKLYELCEIAREELTEGGYNIGRVIARPFIGDKAGNFQRTGNRHDLAVEPPAPTVLQKLVDEKQGHVVSVGKIADIYANCGITKKVKATGLDALFDATLKEMKEAGDKTIVFTNFVDFDSSWGHRRDIAGYAAGLELFDRRLPELMELVGEDDILILTADHGCDPSWTGTDHTREHIPVLIYGPKVKPGSLGHRETFADIGQTLATYFGTSPMDYGKNML.

Asp10, Asp306, His311, Asp347, His348, and His359 together coordinate Mn(2+).

The protein belongs to the phosphopentomutase family. The cofactor is Mn(2+).

It localises to the cytoplasm. It catalyses the reaction 2-deoxy-alpha-D-ribose 1-phosphate = 2-deoxy-D-ribose 5-phosphate. The enzyme catalyses alpha-D-ribose 1-phosphate = D-ribose 5-phosphate. It functions in the pathway carbohydrate degradation; 2-deoxy-D-ribose 1-phosphate degradation; D-glyceraldehyde 3-phosphate and acetaldehyde from 2-deoxy-alpha-D-ribose 1-phosphate: step 1/2. Isomerase that catalyzes the conversion of deoxy-ribose 1-phosphate (dRib-1-P) and ribose 1-phosphate (Rib-1-P) to deoxy-ribose 5-phosphate (dRib-5-P) and ribose 5-phosphate (Rib-5-P), respectively. This Salmonella paratyphi C (strain RKS4594) protein is Phosphopentomutase.